The following is a 494-amino-acid chain: Lysine--tRNA ligase (494 aa).

Mg(2+)-binding residues include glutamate 407 and glutamate 414.

The protein belongs to the class-II aminoacyl-tRNA synthetase family. Homodimer. The cofactor is Mg(2+).

Its subcellular location is the cytoplasm. The catalysed reaction is tRNA(Lys) + L-lysine + ATP = L-lysyl-tRNA(Lys) + AMP + diphosphate. The protein is Lysine--tRNA ligase of Lactococcus lactis subsp. cremoris (strain MG1363).